The sequence spans 196 residues: Neuropeptide prohormone-4 (196 aa).

The N-terminal stretch at 1–25 (MSSPLRMDVTFLLAAIAVTWVCGLK) is a signal peptide. One can recognise an LDL-receptor class A domain in the interval 50 to 90 (DCDIASPFKCEESPTCLRLFQVCNGRWDCEHGSDEDNALCA). 3 disulfide bridges follow: Cys-51–Cys-65, Cys-59–Cys-78, and Cys-72–Cys-89.

As to expression, expressed by the venom duct.

The protein resides in the secreted. The protein is Neuropeptide prohormone-4 of Conus victoriae (Queen Victoria cone).